The primary structure comprises 271 residues: Pyrroline-5-carboxylate reductase (271 aa).

The protein belongs to the pyrroline-5-carboxylate reductase family.

It localises to the cytoplasm. It carries out the reaction L-proline + NADP(+) = (S)-1-pyrroline-5-carboxylate + NADPH + 2 H(+). The enzyme catalyses L-proline + NAD(+) = (S)-1-pyrroline-5-carboxylate + NADH + 2 H(+). It participates in amino-acid biosynthesis; L-proline biosynthesis; L-proline from L-glutamate 5-semialdehyde: step 1/1. Functionally, catalyzes the reduction of 1-pyrroline-5-carboxylate (PCA) to L-proline. The sequence is that of Pyrroline-5-carboxylate reductase from Haemophilus influenzae (strain ATCC 51907 / DSM 11121 / KW20 / Rd).